A 310-amino-acid chain; its full sequence is Apolipoprotein E (310 aa).

The first 18 residues, 1-18, serve as a signal peptide directing secretion; that stretch reads MKVLWAALVVTLLAGCGA. Repeat copies occupy residues 77-98, 99-120, 121-142, 143-164, 165-186, 187-208, 209-226, and 227-248. Residues 77–248 form an 8 X 22 AA approximate tandem repeats region; that stretch reads ALMDDTMKEV…RLDEVREQVQ (172 aa). The segment at 155–165 is LDL and other lipoprotein receptors binding; the sequence is HLRKMRKRLLR. 159–162 serves as a coordination point for heparin; it reads MRKR. Residues 207–283 form a lipid-binding and lipoprotein association region; that stretch reads HTLVSKPLQE…SWFEPLVQDM (77 aa). Heparin is bound at residue 222–229; the sequence is AQRLRGRL. The interval 259 to 310 is homooligomerization; sequence NQVRLQAEAFQGRLKSWFEPLVQDMQQKWAELVEKVQLAVGAVPTSVPSEKQ. The tract at residues 271–283 is specificity for association with VLDL; sequence RLKSWFEPLVQDM.

The protein belongs to the apolipoprotein A1/A4/E family. Homotetramer. May interact with ABCA1; functionally associated with ABCA1 in the biogenesis of HDLs. May interact with APP/A4 amyloid-beta peptide; the interaction is extremely stable in vitro but its physiological significance is unclear. May interact with MAPT. May interact with MAP2. In the cerebrospinal fluid, interacts with secreted SORL1. Interacts with PMEL; this allows the loading of PMEL luminal fragment on ILVs to induce fibril nucleation. Post-translationally, APOE exists as multiple glycosylated and sialylated glycoforms within cells and in plasma. The extent of glycosylation and sialylation are tissue and context specific. In terms of processing, glycated in plasma VLDL. Phosphorylated by FAM20C in the extracellular medium.

Its subcellular location is the secreted. It is found in the extracellular space. The protein localises to the extracellular matrix. The protein resides in the extracellular vesicle. It localises to the endosome. Its subcellular location is the multivesicular body. Functionally, APOE is an apolipoprotein, a protein associating with lipid particles, that mainly functions in lipoprotein-mediated lipid transport between organs via the plasma and interstitial fluids. APOE is a core component of plasma lipoproteins and is involved in their production, conversion and clearance. Apolipoproteins are amphipathic molecules that interact both with lipids of the lipoprotein particle core and the aqueous environment of the plasma. As such, APOE associates with chylomicrons, chylomicron remnants, very low density lipoproteins (VLDL) and intermediate density lipoproteins (IDL) but shows a preferential binding to high-density lipoproteins (HDL). It also binds a wide range of cellular receptors including the LDL receptor/LDLR and the very low-density lipoprotein receptor/VLDLR that mediate the cellular uptake of the APOE-containing lipoprotein particles. Finally, APOE also has a heparin-binding activity and binds heparan-sulfate proteoglycans on the surface of cells, a property that supports the capture and the receptor-mediated uptake of APOE-containing lipoproteins by cells. The sequence is that of Apolipoprotein E (APOE) from Ceratotherium simum cottoni (Northern white rhinoceros).